A 223-amino-acid chain; its full sequence is MNIFVTGTNTDIGKTYVTKYLYKALRTRGYRVCIFKPFQTEEIGGGRYPDLEIYKNECDLDYDVTSLYTFKDPVSPHLAFKIERHQQLNHQTMIDKLESLKAQFDMILIEGAGGIAVPIYEYSDHFYMTTDLIKDTSDFIVSVLPSKLGAINDAIVHQKYIDHQELPPNVLIMNNYTDSAIEQDNLHTIEKLIHKSVYTLGHQATQESFSEAFIQRIIGGSNG.

ATP is bound at residue 11–16 (DIGKTY). Residue Thr-15 coordinates Mg(2+). The active site involves Lys-36. Thr-40 contacts substrate. ATP contacts are provided by residues Asp-50, 110-113 (EGAG), and 174-175 (NN). Residues Asp-50 and Glu-110 each contribute to the Mg(2+) site.

It belongs to the dethiobiotin synthetase family. In terms of assembly, homodimer. Mg(2+) is required as a cofactor.

It is found in the cytoplasm. It carries out the reaction (7R,8S)-7,8-diammoniononanoate + CO2 + ATP = (4R,5S)-dethiobiotin + ADP + phosphate + 3 H(+). The protein operates within cofactor biosynthesis; biotin biosynthesis; biotin from 7,8-diaminononanoate: step 1/2. Catalyzes a mechanistically unusual reaction, the ATP-dependent insertion of CO2 between the N7 and N8 nitrogen atoms of 7,8-diaminopelargonic acid (DAPA, also called 7,8-diammoniononanoate) to form a ureido ring. In Staphylococcus epidermidis (strain ATCC 35984 / DSM 28319 / BCRC 17069 / CCUG 31568 / BM 3577 / RP62A), this protein is ATP-dependent dethiobiotin synthetase BioD.